A 297-amino-acid chain; its full sequence is ATP synthase gamma chain (297 aa).

It belongs to the ATPase gamma chain family. As to quaternary structure, F-type ATPases have 2 components, CF(1) - the catalytic core - and CF(0) - the membrane proton channel. CF(1) has five subunits: alpha(3), beta(3), gamma(1), delta(1), epsilon(1). CF(0) has three main subunits: a, b and c.

Its subcellular location is the cell membrane. Produces ATP from ADP in the presence of a proton gradient across the membrane. The gamma chain is believed to be important in regulating ATPase activity and the flow of protons through the CF(0) complex. This is ATP synthase gamma chain from Micrococcus luteus (strain ATCC 4698 / DSM 20030 / JCM 1464 / CCM 169 / CCUG 5858 / IAM 1056 / NBRC 3333 / NCIMB 9278 / NCTC 2665 / VKM Ac-2230) (Micrococcus lysodeikticus).